Here is a 410-residue protein sequence, read N- to C-terminus: uncharacterized protein (410 aa).

Residues 1-41 form the signal peptide; it reads MVKSFRMKALIAGAAVAAAVSAGAVSDVPAAKVLQPTAAYA.

In terms of assembly, interacts with PcrA, Pdp, YclM, YkvL, YhcQ and YomL. The interaction with PcrA is not essential for cell viability or repair of UV-induced lesions.

Its subcellular location is the secreted. Functionally, increases the processivity of the PcrA helicase, but does not bind to DNA. This is an uncharacterized protein from Bacillus subtilis (strain 168).